The chain runs to 352 residues: Histidinol-phosphate aminotransferase (352 aa).

Lys210 is subject to N6-(pyridoxal phosphate)lysine.

It belongs to the class-II pyridoxal-phosphate-dependent aminotransferase family. Histidinol-phosphate aminotransferase subfamily. As to quaternary structure, homodimer. Requires pyridoxal 5'-phosphate as cofactor.

It carries out the reaction L-histidinol phosphate + 2-oxoglutarate = 3-(imidazol-4-yl)-2-oxopropyl phosphate + L-glutamate. The protein operates within amino-acid biosynthesis; L-histidine biosynthesis; L-histidine from 5-phospho-alpha-D-ribose 1-diphosphate: step 7/9. This chain is Histidinol-phosphate aminotransferase, found in Clostridium acetobutylicum (strain ATCC 824 / DSM 792 / JCM 1419 / IAM 19013 / LMG 5710 / NBRC 13948 / NRRL B-527 / VKM B-1787 / 2291 / W).